The primary structure comprises 190 residues: Probable chorismate pyruvate-lyase (190 aa).

Substrate is bound by residues Arg77, Leu115, and Glu174.

The protein belongs to the UbiC family.

The protein localises to the cytoplasm. The catalysed reaction is chorismate = 4-hydroxybenzoate + pyruvate. It functions in the pathway cofactor biosynthesis; ubiquinone biosynthesis. In terms of biological role, removes the pyruvyl group from chorismate, with concomitant aromatization of the ring, to provide 4-hydroxybenzoate (4HB) for the ubiquinone pathway. In Shewanella sp. (strain MR-4), this protein is Probable chorismate pyruvate-lyase.